The chain runs to 533 residues: 2-isopropylmalate synthase (533 aa).

The Pyruvate carboxyltransferase domain occupies 8-269 (ILIFDTTLRD…YFNPFLGRPA (262 aa)). Mn(2+) contacts are provided by aspartate 17, histidine 208, histidine 210, and asparagine 244. Positions 408 to 533 (RLERVQVSCG…REHPPVVASL (126 aa)) are regulatory domain.

The protein belongs to the alpha-IPM synthase/homocitrate synthase family. LeuA type 1 subfamily. As to quaternary structure, homodimer. Mn(2+) serves as cofactor.

Its subcellular location is the cytoplasm. It catalyses the reaction 3-methyl-2-oxobutanoate + acetyl-CoA + H2O = (2S)-2-isopropylmalate + CoA + H(+). Its pathway is amino-acid biosynthesis; L-leucine biosynthesis; L-leucine from 3-methyl-2-oxobutanoate: step 1/4. Catalyzes the condensation of the acetyl group of acetyl-CoA with 3-methyl-2-oxobutanoate (2-ketoisovalerate) to form 3-carboxy-3-hydroxy-4-methylpentanoate (2-isopropylmalate). The sequence is that of 2-isopropylmalate synthase from Synechocystis sp. (strain ATCC 27184 / PCC 6803 / Kazusa).